Reading from the N-terminus, the 341-residue chain is tRNA N6-adenosine threonylcarbamoyltransferase (341 aa).

Fe cation is bound by residues histidine 111 and histidine 115. Residues leucine 134–glycine 138, aspartate 167, glycine 180, and asparagine 276 each bind substrate. A Fe cation-binding site is contributed by aspartate 304.

The protein belongs to the KAE1 / TsaD family. The cofactor is Fe(2+).

The protein resides in the cytoplasm. It carries out the reaction L-threonylcarbamoyladenylate + adenosine(37) in tRNA = N(6)-L-threonylcarbamoyladenosine(37) in tRNA + AMP + H(+). Required for the formation of a threonylcarbamoyl group on adenosine at position 37 (t(6)A37) in tRNAs that read codons beginning with adenine. Is involved in the transfer of the threonylcarbamoyl moiety of threonylcarbamoyl-AMP (TC-AMP) to the N6 group of A37, together with TsaE and TsaB. TsaD likely plays a direct catalytic role in this reaction. The chain is tRNA N6-adenosine threonylcarbamoyltransferase from Pseudomonas fluorescens (strain SBW25).